A 387-amino-acid polypeptide reads, in one-letter code: Succinate--CoA ligase [ADP-forming] subunit beta (387 aa).

The 236-residue stretch at 9–244 (KALLQRYGVN…WSQDDAKEAE (236 aa)) folds into the ATP-grasp domain. ATP is bound by residues K46, 53-55 (GRG), E99, L102, and E107. Mg(2+) contacts are provided by N199 and D213. Residues N264 and 321 to 323 (GIM) each bind substrate.

This sequence belongs to the succinate/malate CoA ligase beta subunit family. Heterotetramer of two alpha and two beta subunits. Mg(2+) serves as cofactor.

The enzyme catalyses succinate + ATP + CoA = succinyl-CoA + ADP + phosphate. It catalyses the reaction GTP + succinate + CoA = succinyl-CoA + GDP + phosphate. It participates in carbohydrate metabolism; tricarboxylic acid cycle; succinate from succinyl-CoA (ligase route): step 1/1. Its function is as follows. Succinyl-CoA synthetase functions in the citric acid cycle (TCA), coupling the hydrolysis of succinyl-CoA to the synthesis of either ATP or GTP and thus represents the only step of substrate-level phosphorylation in the TCA. The beta subunit provides nucleotide specificity of the enzyme and binds the substrate succinate, while the binding sites for coenzyme A and phosphate are found in the alpha subunit. In Methylobacillus flagellatus (strain ATCC 51484 / DSM 6875 / VKM B-1610 / KT), this protein is Succinate--CoA ligase [ADP-forming] subunit beta.